The following is a 922-amino-acid chain: Pyruvate dehydrogenase E1 component (922 aa).

Homodimer. Part of an unusual ODH/PDH supercomplex, consisting of AceE (E1), AceF (E2), and Lpd (E3) together with OdhA (E1+E2). Mg(2+) is required as a cofactor. Thiamine diphosphate serves as cofactor.

It catalyses the reaction N(6)-[(R)-lipoyl]-L-lysyl-[protein] + pyruvate + H(+) = N(6)-[(R)-S(8)-acetyldihydrolipoyl]-L-lysyl-[protein] + CO2. In terms of biological role, is a specific component of the pyruvate dehydrogenase (PDH) complex, that catalyzes the overall conversion of pyruvate to acetyl-CoA and CO(2). AceE has reductase activity with pyruvate but does not react with 2-oxoglutarate. The polypeptide is Pyruvate dehydrogenase E1 component (aceE) (Corynebacterium glutamicum (strain ATCC 13032 / DSM 20300 / JCM 1318 / BCRC 11384 / CCUG 27702 / LMG 3730 / NBRC 12168 / NCIMB 10025 / NRRL B-2784 / 534)).